We begin with the raw amino-acid sequence, 433 residues long: MSKIVKVIGREIIDSRGNPTVEAEVHLEGGFVGMAAAPSGASTGSREALELRDGDKSRFLGKGVLKALEAVNGPIAQALLGKDAKDQATVDQIMIDLDGTENKSKFGANAILAVSLANAKAAAAAKGMPLYAHIAELNGTPGVYSMPLPMMNIINGGEHADNNVDIQEFMIQPVGAKTLKEAVRMGAEVFHNLAKVLKSKGYNTAVGDEGGFAPNLKSNAEALEVIAEAVAAAGYKLGTDVTLAMDCAASEFYDAEKKEYNLKGEGRVFTSNGFSDFLEELTAKFPIVSIEDGLDESDWEGFAYQTQKLGKKIQIVGDDLFVTNTKILKRGIDNGIANSILIKFNQIGSLTETLAAIKMAKDAGYTAVISHRSGETEDATIADLAVGTAAGQIKTGSMSRSDRVAKYNQLIRIEEALGAKAPFRGLKEVKNQA.

Glutamine 167 provides a ligand contact to (2R)-2-phosphoglycerate. The active-site Proton donor is glutamate 209. Aspartate 246 contacts Mg(2+). Positions 252 to 260 (FYDAEKKEY) match the Plasminogen-binding motif motif. Mg(2+) is bound by residues glutamate 291 and aspartate 318. Positions 343, 372, 373, and 394 each coordinate (2R)-2-phosphoglycerate. The active-site Proton acceptor is the lysine 343.

This sequence belongs to the enolase family. Component of the RNA degradosome, a multiprotein complex involved in RNA processing and mRNA degradation. Requires Mg(2+) as cofactor.

It localises to the cell inner membrane. It is found in the cell outer membrane. The protein resides in the cytoplasm. The protein localises to the secreted. Its subcellular location is the cell surface. It catalyses the reaction (2R)-2-phosphoglycerate = phosphoenolpyruvate + H2O. It functions in the pathway carbohydrate degradation; glycolysis; pyruvate from D-glyceraldehyde 3-phosphate: step 4/5. Its function is as follows. Catalyzes the reversible conversion of 2-phosphoglycerate (2-PG) into phosphoenolpyruvate (PEP). It is essential for the degradation of carbohydrates via glycolysis. Functionally, 'Moonlights' as a plasminogen receptor and plasmin activator. Binds host (human) plasminogen in vitro. Binds human plasmin and plasminogen on the cell surface; enhances the activity of host tissue-specific plasminogen activator (tPA). Plasmin bound to bacteria is partially protected from its physiological inhibitor alpha-2AP (SERPINF2). In Aeromonas hydrophila, this protein is Enolase.